We begin with the raw amino-acid sequence, 390 residues long: 3-ketoacyl-CoA thiolase (390 aa).

Residue Cys95 is the Acyl-thioester intermediate of the active site. Catalysis depends on proton acceptor residues His346 and Cys376.

This sequence belongs to the thiolase-like superfamily. Thiolase family. Heterotetramer of two alpha chains (FadB) and two beta chains (FadA).

It is found in the cytoplasm. It carries out the reaction an acyl-CoA + acetyl-CoA = a 3-oxoacyl-CoA + CoA. It participates in lipid metabolism; fatty acid beta-oxidation. Functionally, catalyzes the final step of fatty acid oxidation in which acetyl-CoA is released and the CoA ester of a fatty acid two carbons shorter is formed. The sequence is that of 3-ketoacyl-CoA thiolase from Acinetobacter baumannii (strain AB307-0294).